A 535-amino-acid polypeptide reads, in one-letter code: Arylsulfatase G (535 aa).

The N-terminal stretch at 1–18 (MGWLFLKVLFLGVTFLGC) is a signal peptide. 3 residues coordinate Ca(2+): aspartate 44, aspartate 45, and cysteine 84. Residue cysteine 84 is the Nucleophile of the active site. 3-oxoalanine (Cys) is present on cysteine 84. A glycan (N-linked (GlcNAc...) asparagine) is linked at asparagine 117. Residue lysine 137 coordinates substrate. Residue histidine 139 is part of the active site. Residue serine 162 coordinates substrate. Asparagine 215 is a glycosylation site (N-linked (GlcNAc...) asparagine). Histidine 251 contacts substrate. Residues aspartate 302 and asparagine 303 each contribute to the Ca(2+) site. 2 N-linked (GlcNAc...) asparagine glycosylation sites follow: asparagine 356 and asparagine 497.

This sequence belongs to the sulfatase family. The cofactor is Ca(2+). N-glycosylated with both high mannose and complex type sugars. In terms of processing, the conversion to 3-oxoalanine (also known as C-formylglycine, FGly), of a serine or cysteine residue in prokaryotes and of a cysteine residue in eukaryotes, is critical for catalytic activity. Post-translationally, the 63-kDa precursor undergoes proteolytic processing in two steps, yielding two fragments in the first step (apparent molecular masses of 44 and 18 kDa). In the second step, the 44-kDa fragment is processed further to the 34- and 10-kDa chains. The 10-kDa chain is a cleavage product of the 44-kDa fragment but linked to the 18-kDa chain through a disulfide bridge.

Its subcellular location is the lysosome. It catalyses the reaction an aryl sulfate + H2O = a phenol + sulfate + H(+). The enzyme catalyses Hydrolysis of the 3-sulfate groups of the N-sulfo-D-glucosamine 3-O-sulfate units of heparin.. Its function is as follows. Displays arylsulfatase activity with pseudosubstrates at acidic pH, such as p-nitrocatechol sulfate. Catalyzes the hydrolysis of the 3-sulfate groups of the N-sulfo-D-glucosamine 3-O-sulfate units of heparin. The sequence is that of Arylsulfatase G (ARSG) from Canis lupus familiaris (Dog).